A 340-amino-acid polypeptide reads, in one-letter code: Phosphoribosylformylglycinamidine cyclo-ligase (340 aa).

This sequence belongs to the AIR synthase family.

The protein localises to the cytoplasm. It carries out the reaction 2-formamido-N(1)-(5-O-phospho-beta-D-ribosyl)acetamidine + ATP = 5-amino-1-(5-phospho-beta-D-ribosyl)imidazole + ADP + phosphate + H(+). It participates in purine metabolism; IMP biosynthesis via de novo pathway; 5-amino-1-(5-phospho-D-ribosyl)imidazole from N(2)-formyl-N(1)-(5-phospho-D-ribosyl)glycinamide: step 2/2. The protein is Phosphoribosylformylglycinamidine cyclo-ligase of Streptococcus pyogenes serotype M6 (strain ATCC BAA-946 / MGAS10394).